We begin with the raw amino-acid sequence, 126 residues long: Large ribosomal subunit protein uL24 (126 aa).

The disordered stretch occupies residues 1–23; the sequence is MKFSRDVTSSRRKQRKAHFGAPS.

Belongs to the universal ribosomal protein uL24 family. As to quaternary structure, component of the large ribosomal subunit (LSU). Mature yeast ribosomes consist of a small (40S) and a large (60S) subunit. The 40S small subunit contains 1 molecule of ribosomal RNA (18S rRNA) and at least 33 different proteins. The large 60S subunit contains 3 rRNA molecules (25S, 5.8S and 5S rRNA) and at least 46 different proteins.

The protein resides in the cytoplasm. Its subcellular location is the nucleus. It localises to the nucleolus. In terms of biological role, component of the ribosome, a large ribonucleoprotein complex responsible for the synthesis of proteins in the cell. The small ribosomal subunit (SSU) binds messenger RNAs (mRNAs) and translates the encoded message by selecting cognate aminoacyl-transfer RNA (tRNA) molecules. The large subunit (LSU) contains the ribosomal catalytic site termed the peptidyl transferase center (PTC), which catalyzes the formation of peptide bonds, thereby polymerizing the amino acids delivered by tRNAs into a polypeptide chain. The nascent polypeptides leave the ribosome through a tunnel in the LSU and interact with protein factors that function in enzymatic processing, targeting, and the membrane insertion of nascent chains at the exit of the ribosomal tunnel. The chain is Large ribosomal subunit protein uL24 (rpl26) from Schizosaccharomyces pombe (strain 972 / ATCC 24843) (Fission yeast).